The sequence spans 420 residues: 5'-deoxyadenosine deaminase (420 aa).

Zn(2+) is bound by residues His55 and His57. Residues Glu84 and His176 each contribute to the substrate site. His203 contacts Zn(2+). Glu206 and Asp292 together coordinate substrate. Position 292 (Asp292) interacts with Zn(2+).

It belongs to the metallo-dependent hydrolases superfamily. MTA/SAH deaminase family. In terms of assembly, homotetramer. Zn(2+) serves as cofactor.

The catalysed reaction is 5'-deoxyadenosine + H2O + H(+) = 5'-deoxyinosine + NH4(+). It carries out the reaction S-adenosyl-L-homocysteine + H2O + H(+) = S-inosyl-L-homocysteine + NH4(+). The enzyme catalyses S-methyl-5'-thioadenosine + H2O + H(+) = S-methyl-5'-thioinosine + NH4(+). It catalyses the reaction adenosine + H2O + H(+) = inosine + NH4(+). The protein operates within amino-acid biosynthesis; S-adenosyl-L-methionine biosynthesis. In terms of biological role, catalyzes the deamination of three SAM-derived enzymatic products, namely 5'-deoxyadenosine, S-adenosyl-L-homocysteine, and 5'-methylthioadenosine, to produce the inosine analogs. Can also deaminate adenosine. The preferred substrate for this enzyme is 5'-deoxyadenosine, but all these substrates are efficiently deaminated. Likely functions in a S-adenosyl-L-methionine (SAM) recycling pathway from S-adenosyl-L-homocysteine (SAH) produced from SAM-dependent methylation reactions. May also be involved in the recycling of 5'-deoxyadenosine, whereupon the 5'-deoxyribose moiety of 5'-deoxyinosine is further metabolized to deoxyhexoses used for the biosynthesis of aromatic amino acids in methanogens. This Methanocaldococcus jannaschii (strain ATCC 43067 / DSM 2661 / JAL-1 / JCM 10045 / NBRC 100440) (Methanococcus jannaschii) protein is 5'-deoxyadenosine deaminase.